The sequence spans 672 residues: tRNA 5-methylaminomethyl-2-thiouridine biosynthesis bifunctional protein MnmC (672 aa).

Positions 1–241 are tRNA (mnm(5)s(2)U34)-methyltransferase; that stretch reads MHKVQFADVH…KRECLQGVKA (241 aa). The segment at 269–672 is FAD-dependent cmnm(5)s(2)U34 oxidoreductase; the sequence is IGGGIASVFS…LLKGSQVKQG (404 aa).

This sequence in the N-terminal section; belongs to the methyltransferase superfamily. tRNA (mnm(5)s(2)U34)-methyltransferase family. The protein in the C-terminal section; belongs to the DAO family. FAD serves as cofactor.

Its subcellular location is the cytoplasm. The catalysed reaction is 5-aminomethyl-2-thiouridine(34) in tRNA + S-adenosyl-L-methionine = 5-methylaminomethyl-2-thiouridine(34) in tRNA + S-adenosyl-L-homocysteine + H(+). In terms of biological role, catalyzes the last two steps in the biosynthesis of 5-methylaminomethyl-2-thiouridine (mnm(5)s(2)U) at the wobble position (U34) in tRNA. Catalyzes the FAD-dependent demodification of cmnm(5)s(2)U34 to nm(5)s(2)U34, followed by the transfer of a methyl group from S-adenosyl-L-methionine to nm(5)s(2)U34, to form mnm(5)s(2)U34. The protein is tRNA 5-methylaminomethyl-2-thiouridine biosynthesis bifunctional protein MnmC of Pasteurella multocida (strain Pm70).